Consider the following 339-residue polypeptide: Thermospermine synthase ACAULIS5 (339 aa).

Residues 33–270 (CHWYEETIDD…DTWGWVMASD (238 aa)) form the PABS domain. S-adenosyl 3-(methylsulfanyl)propylamine is bound by residues glutamine 62, glutamate 117, aspartate 137, and 168 to 169 (DA). Catalysis depends on aspartate 186, which acts as the Proton acceptor.

It belongs to the spermidine/spermine synthase family. In terms of tissue distribution, highly expressed in stem internodes and roots. Lower levels in young seedlings before flowering and rosette leaves. Expressed in the vascular tissues. Restricted to procambial and/or provascular cells during primary root development and early leaves development.

It catalyses the reaction S-adenosyl 3-(methylsulfanyl)propylamine + spermidine = thermospermine + S-methyl-5'-thioadenosine + H(+). Required for correct xylem specification through regulation of the lifetime of the xylem elements. Prevents premature death of the xylem vessel elements. In Arabidopsis thaliana (Mouse-ear cress), this protein is Thermospermine synthase ACAULIS5 (ACL5).